Here is a 208-residue protein sequence, read N- to C-terminus: MEVNIVNIANEVVGSIDLNPQVFGLEPRRDVLKEVVNWQLAKRRAGTHKAKGISDISGTTAKPYRQKHTGRARQGSLRSPQFRGGAVIFGPVPRSHEYSLNKKVRRLGLKVALSMKVAANKLVVLDSLDVDLKKTADAKGVFGNFAGHSSYLVVSESCKEEVVRACRNLRGVDLLKCVGINVLDILKHDCVILTVDTVKSLEGRLSNE.

Residues 49-78 form a disordered region; that stretch reads KAKGISDISGTTAKPYRQKHTGRARQGSLR.

The protein belongs to the universal ribosomal protein uL4 family. In terms of assembly, part of the 50S ribosomal subunit.

In terms of biological role, one of the primary rRNA binding proteins, this protein initially binds near the 5'-end of the 23S rRNA. It is important during the early stages of 50S assembly. It makes multiple contacts with different domains of the 23S rRNA in the assembled 50S subunit and ribosome. Functionally, forms part of the polypeptide exit tunnel. The protein is Large ribosomal subunit protein uL4 of Anaplasma phagocytophilum (strain HZ).